The chain runs to 1177 residues: Transcription-repair-coupling factor (1177 aa).

The 162-residue stretch at 638-799 (DMERERPMDR…MLGVRDLSVI (162 aa)) folds into the Helicase ATP-binding domain. 651–658 (GDVGYGKT) provides a ligand contact to ATP. A DEEQ box motif is present at residues 752–755 (DEEQ). The Helicase C-terminal domain maps to 820–974 (LVREAIEREL…GFKIAMRDLT (155 aa)).

This sequence in the N-terminal section; belongs to the UvrB family. The protein in the C-terminal section; belongs to the helicase family. RecG subfamily.

The protein resides in the cytoplasm. In terms of biological role, couples transcription and DNA repair by recognizing RNA polymerase (RNAP) stalled at DNA lesions. Mediates ATP-dependent release of RNAP and its truncated transcript from the DNA, and recruitment of nucleotide excision repair machinery to the damaged site. Probably required to repair non-bulky DNA lesions. This Bacillus subtilis (strain 168) protein is Transcription-repair-coupling factor.